The primary structure comprises 163 residues: ATP synthase subunit b 1 (163 aa).

The chain crosses the membrane as a helical span at residues 5-25 (LDATFFAFVGLVLFLALVVYL).

This sequence belongs to the ATPase B chain family. F-type ATPases have 2 components, F(1) - the catalytic core - and F(0) - the membrane proton channel. F(1) has five subunits: alpha(3), beta(3), gamma(1), delta(1), epsilon(1). F(0) has three main subunits: a(1), b(2) and c(10-14). The alpha and beta chains form an alternating ring which encloses part of the gamma chain. F(1) is attached to F(0) by a central stalk formed by the gamma and epsilon chains, while a peripheral stalk is formed by the delta and b chains.

Its subcellular location is the cell inner membrane. F(1)F(0) ATP synthase produces ATP from ADP in the presence of a proton or sodium gradient. F-type ATPases consist of two structural domains, F(1) containing the extramembraneous catalytic core and F(0) containing the membrane proton channel, linked together by a central stalk and a peripheral stalk. During catalysis, ATP synthesis in the catalytic domain of F(1) is coupled via a rotary mechanism of the central stalk subunits to proton translocation. Its function is as follows. Component of the F(0) channel, it forms part of the peripheral stalk, linking F(1) to F(0). This Rhizobium etli (strain CIAT 652) protein is ATP synthase subunit b 1.